The chain runs to 107 residues: Thiosulfate sulfurtransferase GlpE (107 aa).

In terms of domain architecture, Rhodanese spans Ala17 to Ser105. The active-site Cysteine persulfide intermediate is Cys65.

It belongs to the GlpE family.

It localises to the cytoplasm. The catalysed reaction is thiosulfate + hydrogen cyanide = thiocyanate + sulfite + 2 H(+). It catalyses the reaction thiosulfate + [thioredoxin]-dithiol = [thioredoxin]-disulfide + hydrogen sulfide + sulfite + 2 H(+). Functionally, transferase that catalyzes the transfer of sulfur from thiosulfate to thiophilic acceptors such as cyanide or dithiols. May function in a CysM-independent thiosulfate assimilation pathway by catalyzing the conversion of thiosulfate to sulfite, which can then be used for L-cysteine biosynthesis. The sequence is that of Thiosulfate sulfurtransferase GlpE from Erwinia tasmaniensis (strain DSM 17950 / CFBP 7177 / CIP 109463 / NCPPB 4357 / Et1/99).